The chain runs to 457 residues: Argininosuccinate lyase (457 aa).

This sequence belongs to the lyase 1 family. Argininosuccinate lyase subfamily.

It is found in the cytoplasm. The enzyme catalyses 2-(N(omega)-L-arginino)succinate = fumarate + L-arginine. Its pathway is amino-acid biosynthesis; L-arginine biosynthesis; L-arginine from L-ornithine and carbamoyl phosphate: step 3/3. The sequence is that of Argininosuccinate lyase from Sodalis glossinidius (strain morsitans).